The primary structure comprises 369 residues: UPF0324 membrane protein DVU_0543 (369 aa).

A run of 9 helical transmembrane segments spans residues Ile-13–Val-31, Trp-46–Phe-65, Gly-110–Gly-132, Thr-142–Val-164, Leu-171–Gly-193, Trp-240–Gly-262, Thr-269–Ala-291, Leu-306–Ile-328, and Leu-341–Ile-363.

Belongs to the UPF0324 family.

The protein localises to the cell membrane. The protein is UPF0324 membrane protein DVU_0543 of Nitratidesulfovibrio vulgaris (strain ATCC 29579 / DSM 644 / CCUG 34227 / NCIMB 8303 / VKM B-1760 / Hildenborough) (Desulfovibrio vulgaris).